Here is a 323-residue protein sequence, read N- to C-terminus: tRNA dimethylallyltransferase (323 aa).

13–20 (GPTASGKT) provides a ligand contact to ATP. 15-20 (TASGKT) contributes to the substrate binding site. 4 interaction with substrate tRNA regions span residues 42–45 (DSAL), 166–170 (QRIQR), 251–256 (RCVGYR), and 284–291 (KRQITWLR).

This sequence belongs to the IPP transferase family. In terms of assembly, monomer. Mg(2+) serves as cofactor.

The enzyme catalyses adenosine(37) in tRNA + dimethylallyl diphosphate = N(6)-dimethylallyladenosine(37) in tRNA + diphosphate. Its function is as follows. Catalyzes the transfer of a dimethylallyl group onto the adenine at position 37 in tRNAs that read codons beginning with uridine, leading to the formation of N6-(dimethylallyl)adenosine (i(6)A). The sequence is that of tRNA dimethylallyltransferase from Acidovorax sp. (strain JS42).